An 86-amino-acid chain; its full sequence is Large ribosomal subunit protein bL35m (86 aa).

The transit peptide at 1 to 18 (MLVVFQRVVRATVLVGRK) directs the protein to the mitochondrion. The segment at 45–69 (RKHAGAQHLNRDTSSSTRARQRQWE) is disordered.

The protein belongs to the bacterial ribosomal protein bL35 family. As to quaternary structure, component of the mitochondrial large ribosomal subunit (mt-LSU). Mature yeast 74S mitochondrial ribosomes consist of a small (37S) and a large (54S) subunit. The 37S small subunit contains a 15S ribosomal RNA (15S mt-rRNA) and at least 32 different proteins. The 54S large subunit contains a 21S rRNA (21S mt-rRNA) and at least 45 different proteins.

The protein localises to the mitochondrion. Its function is as follows. Component of the mitochondrial ribosome (mitoribosome), a dedicated translation machinery responsible for the synthesis of mitochondrial genome-encoded proteins, including at least some of the essential transmembrane subunits of the mitochondrial respiratory chain. The mitoribosomes are attached to the mitochondrial inner membrane and translation products are cotranslationally integrated into the membrane. The polypeptide is Large ribosomal subunit protein bL35m (new15) (Schizosaccharomyces pombe (strain 972 / ATCC 24843) (Fission yeast)).